The chain runs to 207 residues: Adenine phosphoribosyltransferase (207 aa).

A disordered region spans residues 1-33; that stretch reads MRPAKPPQSKERKRSKSLTSADHDNSPQRAETA.

It belongs to the purine/pyrimidine phosphoribosyltransferase family. Homodimer.

The protein localises to the cytoplasm. The enzyme catalyses AMP + diphosphate = 5-phospho-alpha-D-ribose 1-diphosphate + adenine. It participates in purine metabolism; AMP biosynthesis via salvage pathway; AMP from adenine: step 1/1. Catalyzes a salvage reaction resulting in the formation of AMP, that is energically less costly than de novo synthesis. This is Adenine phosphoribosyltransferase from Corynebacterium jeikeium (strain K411).